Consider the following 625-residue polypeptide: tRNA uridine 5-carboxymethylaminomethyl modification enzyme MnmG (625 aa).

FAD is bound by residues 16–21, isoleucine 128, and serine 183; that span reads GGGHAG. An NAD(+)-binding site is contributed by 275–289; that stretch reads GPRYCPSIEDKVVRF. Glutamine 372 contacts FAD.

It belongs to the MnmG family. In terms of assembly, homodimer. Heterotetramer of two MnmE and two MnmG subunits. FAD is required as a cofactor.

The protein localises to the cytoplasm. NAD-binding protein involved in the addition of a carboxymethylaminomethyl (cmnm) group at the wobble position (U34) of certain tRNAs, forming tRNA-cmnm(5)s(2)U34. This is tRNA uridine 5-carboxymethylaminomethyl modification enzyme MnmG from Protochlamydia amoebophila (strain UWE25).